Reading from the N-terminus, the 548-residue chain is Probable delta-1-pyrroline-5-carboxylate dehydrogenase (548 aa).

The Proton acceptor role is filled by Glu298. The Nucleophile role is filled by Cys332. Residues Ser391, Ser394, and Ser396 each carry the phosphoserine modification.

This sequence belongs to the aldehyde dehydrogenase family.

It carries out the reaction L-glutamate 5-semialdehyde + NAD(+) + H2O = L-glutamate + NADH + 2 H(+). Its pathway is amino-acid degradation; L-proline degradation into L-glutamate; L-glutamate from L-proline: step 2/2. The chain is Probable delta-1-pyrroline-5-carboxylate dehydrogenase from Schizosaccharomyces pombe (strain 972 / ATCC 24843) (Fission yeast).